The chain runs to 273 residues: Gap junction beta-5 protein (273 aa).

At 1–20 (MNWSIFEGLLSGVNKYSTAF) the chain is on the cytoplasmic side. A helical transmembrane segment spans residues 21–40 (GRIWLSLVFIFRVLVYLVTA). At 41–75 (ERVWSDDHKDFDCNTRQPGCSNVCFDEFFPVSHVR) the chain is on the extracellular side. Residues 76–98 (LWALQLILVTCPSLLVVMHVAYR) form a helical membrane-spanning segment. The Cytoplasmic segment spans residues 99–126 (EVQEKRHREAHGENSGRLYLNPGKKRGG). A helical transmembrane segment spans residues 127 to 149 (LWWTYVCSLVFKASVDIAFLYVF). At 150-187 (HSFYPKYILPPVVKCHADPCPNIVDCFISKPSEKNIFT) the chain is on the extracellular side. Residues 188 to 210 (LFMVATAAICILLNLVELIYLVS) form a helical membrane-spanning segment. Residues 211–273 (KRCHECLAAR…PRDHVKKTIL (63 aa)) lie on the Cytoplasmic side of the membrane.

The protein belongs to the connexin family. Beta-type (group I) subfamily. A connexon is composed of a hexamer of connexins.

The protein resides in the cell membrane. The protein localises to the cell junction. Its subcellular location is the gap junction. In terms of biological role, one gap junction consists of a cluster of closely packed pairs of transmembrane channels, the connexons, through which materials of low MW diffuse from one cell to a neighboring cell. In Homo sapiens (Human), this protein is Gap junction beta-5 protein (GJB5).